The chain runs to 490 residues: Aspartyl/glutamyl-tRNA(Asn/Gln) amidotransferase subunit B (490 aa).

This sequence belongs to the GatB/GatE family. GatB subfamily. In terms of assembly, heterotrimer of A, B and C subunits.

It catalyses the reaction L-glutamyl-tRNA(Gln) + L-glutamine + ATP + H2O = L-glutaminyl-tRNA(Gln) + L-glutamate + ADP + phosphate + H(+). The enzyme catalyses L-aspartyl-tRNA(Asn) + L-glutamine + ATP + H2O = L-asparaginyl-tRNA(Asn) + L-glutamate + ADP + phosphate + 2 H(+). Allows the formation of correctly charged Asn-tRNA(Asn) or Gln-tRNA(Gln) through the transamidation of misacylated Asp-tRNA(Asn) or Glu-tRNA(Gln) in organisms which lack either or both of asparaginyl-tRNA or glutaminyl-tRNA synthetases. The reaction takes place in the presence of glutamine and ATP through an activated phospho-Asp-tRNA(Asn) or phospho-Glu-tRNA(Gln). The sequence is that of Aspartyl/glutamyl-tRNA(Asn/Gln) amidotransferase subunit B from Methylorubrum populi (strain ATCC BAA-705 / NCIMB 13946 / BJ001) (Methylobacterium populi).